The following is a 233-amino-acid chain: Putative cobalt transport protein CbiM (233 aa).

The next 6 membrane-spanning stretches (helical) occupy residues 9 to 29 (PPMW…YGIV), 43 to 63 (PLVA…MPSV), 75 to 95 (LGAV…VLLF), 107 to 127 (TLGA…VIVY), 138 to 158 (TVGI…TTAV), and 177 to 197 (IVIY…LTVI).

It belongs to the CbiM family. Forms an energy-coupling factor (ECF) transporter complex composed of an ATP-binding protein (A component, CbiO), a transmembrane protein (T component, CbiQ) and 2 possible substrate-capture proteins (S components, CbiM and CbiN) of unknown stoichimetry.

The protein localises to the cell membrane. Its pathway is cofactor biosynthesis; adenosylcobalamin biosynthesis. In terms of biological role, part of the energy-coupling factor (ECF) transporter complex CbiMNOQ involved in cobalt import. The chain is Putative cobalt transport protein CbiM from Methanocaldococcus jannaschii (strain ATCC 43067 / DSM 2661 / JAL-1 / JCM 10045 / NBRC 100440) (Methanococcus jannaschii).